A 93-amino-acid polypeptide reads, in one-letter code: MNKDIFQGKIKEISGELRKKWGALTDDDIQKTKGNMEALSGLVQQKIGLSKEEASKQLSEFMTDIDKKFTSTGESASDKVNSKIDAIKNKLSH.

It belongs to the UPF0337 (CsbD) family.

This Bdellovibrio bacteriovorus (strain ATCC 15356 / DSM 50701 / NCIMB 9529 / HD100) protein is UPF0337 protein Bd3330.